Consider the following 1003-residue polypeptide: Phosphoenolpyruvate carboxylase (1003 aa).

Residues 1–24 are disordered; the sequence is MIMTVSDPGGSSMSSSSAITPESE. Catalysis depends on residues H190 and K646.

Belongs to the PEPCase type 1 family. Mg(2+) serves as cofactor.

The enzyme catalyses oxaloacetate + phosphate = phosphoenolpyruvate + hydrogencarbonate. Forms oxaloacetate, a four-carbon dicarboxylic acid source for the tricarboxylic acid cycle. This chain is Phosphoenolpyruvate carboxylase, found in Synechococcus sp. (strain WH7803).